The following is a 553-amino-acid chain: Hydroxylamine reductase (553 aa).

[4Fe-4S] cluster-binding residues include Cys-3, Cys-6, Cys-15, and Cys-21. His-244, Glu-268, Cys-312, Cys-406, Cys-434, Cys-459, Glu-494, and Lys-496 together coordinate hybrid [4Fe-2O-2S] cluster. Cys-406 carries the cysteine persulfide modification.

The protein belongs to the HCP family. As to quaternary structure, monomer. [4Fe-4S] cluster is required as a cofactor. The cofactor is hybrid [4Fe-2O-2S] cluster.

Its subcellular location is the cytoplasm. It carries out the reaction A + NH4(+) + H2O = hydroxylamine + AH2 + H(+). In terms of biological role, catalyzes the reduction of hydroxylamine to form NH(3) and H(2)O. This is Hydroxylamine reductase from Nitratidesulfovibrio vulgaris (strain ATCC 29579 / DSM 644 / CCUG 34227 / NCIMB 8303 / VKM B-1760 / Hildenborough) (Desulfovibrio vulgaris).